Consider the following 51-residue polypeptide: Large ribosomal subunit protein eL39-like (51 aa).

This sequence belongs to the eukaryotic ribosomal protein eL39 family. Component of a male germ cell-specific 60S large ribosomal subunit (LSU), which contains RPL10L and RPL39L, instead of RPL10 and RPL39 paralogs. The composition of the rest of the complex is similar to classical ribosomes. As to expression, highly expressed in spermatocytes and spermatids. Highly expressed in embryonic stem cells.

It localises to the cytoplasm. Functionally, male germ cell-specific component of the ribosome, which is required for the formation of sperm and male fertility. Replaces the RPL39 paralog in the ribosome of male germ cells. The ribosome is a large ribonucleoprotein complex responsible for the synthesis of proteins in the cell. The male germ cell-specific ribosome displays a ribosomal polypeptide exit tunnel of distinct size and charge states compared with the classical ribosome. It is responsible for regulating the biosynthesis and folding of a subset of male germ-cell-specific proteins that are essential for the formation of sperm. The chain is Large ribosomal subunit protein eL39-like from Mus musculus (Mouse).